The sequence spans 464 residues: Na(+)/H(+) antiporter NhaA (464 aa).

The next 12 helical transmembrane spans lie at 37-57 (GSGI…NTSC), 82-102 (IHYW…GLEI), 118-138 (VLPI…YFSF), 145-165 (VSGW…ILLL), 176-196 (AVLV…IAIF), 200-220 (NLAW…LLLN), 226-246 (ALWA…FSGV), 248-268 (ATVA…YSPT), 321-341 (ILNT…NAGV), 360-380 (VFFG…MICV), 396-416 (VLGI…VSEL), and 430-450 (ITIL…LRFI).

Belongs to the NhaA Na(+)/H(+) (TC 2.A.33) antiporter family.

It is found in the cell inner membrane. It catalyses the reaction Na(+)(in) + 2 H(+)(out) = Na(+)(out) + 2 H(+)(in). In terms of biological role, na(+)/H(+) antiporter that extrudes sodium in exchange for external protons. This Dichelobacter nodosus (strain VCS1703A) protein is Na(+)/H(+) antiporter NhaA.